The sequence spans 431 residues: Lipid storage droplets surface-binding protein 1 (431 aa).

The interval 397-431 (KVTGSDGGNSNHRSSRRRQDPNHYSATHNNINGVY) is disordered. Polar residues predominate over residues 418–431 (NHYSATHNNINGVY).

The protein belongs to the perilipin family.

It is found in the cytoplasm. Its subcellular location is the lipid droplet. Its function is as follows. Required for normal deposition of neutral lipids in the oocyte. The sequence is that of Lipid storage droplets surface-binding protein 1 from Drosophila melanogaster (Fruit fly).